A 747-amino-acid chain; its full sequence is Myotubularin-related protein 12 (747 aa).

Over residues 1 to 14 (MLGKGVVGGGGGTK) the composition is skewed to gly residues. The tract at residues 1–21 (MLGKGVVGGGGGTKGPKPSFV) is disordered. Positions 205–643 (FDTLKDWCWE…PEIKVWAQRY (439 aa)) constitute a Myotubularin phosphatase domain. The tract at residues 449-558 (VPVFLLFLDC…KGQRKGMRFK (110 aa)) is interaction with MTM1. Phosphoserine is present on residues Ser564, Ser601, and Ser716.

It belongs to the protein-tyrosine phosphatase family. Non-receptor class myotubularin subfamily. In terms of assembly, heterodimer with lipid phosphatase MTM1. Heterodimer with lipid phosphatase MTMR2.

The protein localises to the cytoplasm. The protein resides in the sarcoplasmic reticulum. Its subcellular location is the myofibril. It is found in the sarcomere. Functionally, acts as an adapter for the myotubularin-related phosphatases. Regulates phosphatase MTM1 protein stability and possibly its intracellular location. By stabilizing MTM1 protein levels, required for skeletal muscle maintenance but not for myogenesis. This chain is Myotubularin-related protein 12 (MTMR12), found in Pongo abelii (Sumatran orangutan).